The sequence spans 149 residues: Calmodulin-1 (149 aa).

The residue at position 2 (A2) is an N-acetylalanine. EF-hand domains are found at residues 8–43 (EQIAEFKEAFSLFDKDGDGCITTKELGTVMRSLGQN), 44–79 (PTEAELQDMISEADADQNGTIDFPEFLNLMARKMKD), 81–116 (DSEEELKEAFKVFDKDQNGFISAAELRHVMTNLGEK), and 117–149 (LTDEEVDEMIREADIDGDGQVNYEEFVRMMLAK). 14 residues coordinate Ca(2+): D21, D23, D25, C27, E32, D57, D59, N61, T63, E68, D94, D96, N98, and E105. The residue at position 116 (K116) is an N6,N6,N6-trimethyllysine. Positions 130, 132, 134, 136, and 141 each coordinate Ca(2+).

This sequence belongs to the calmodulin family. High expression in stolon tips and stems, moderate in roots, and very low in leaves. Localized in the meristematic regions of the shoot and root tips, the tip of the developing tuber and the vascular zones of petiole and tuber. Not detected in mesophyll cells.

Its function is as follows. Calmodulin mediates the control of a large number of enzymes, ion channels and other proteins by Ca(2+). Among the enzymes to be stimulated by the calmodulin-Ca(2+) complex are a number of protein kinases and phosphatases. This Solanum tuberosum (Potato) protein is Calmodulin-1 (PCM1).